Consider the following 364-residue polypeptide: Chaperone protein DnaJ 1 (364 aa).

The region spanning 7–71 (DYYEILGVNR…ERRSEYDAIL (65 aa)) is the J domain. Residues 124-200 (GCEKEIIYSR…CYGRGRVSAQ (77 aa)) form a CR-type zinc finger. Residues cysteine 137, cysteine 140, cysteine 154, cysteine 157, cysteine 174, cysteine 177, cysteine 188, and cysteine 191 each contribute to the Zn(2+) site. CXXCXGXG motif repeat units follow at residues 137–144 (CPVCEGMG), 154–161 (CHACNGEG), 174–181 (CSVCKGKG), and 188–195 (CPTCYGRG).

The protein belongs to the DnaJ family. Homodimer. Zn(2+) is required as a cofactor.

It localises to the cytoplasm. Functionally, participates actively in the response to hyperosmotic and heat shock by preventing the aggregation of stress-denatured proteins and by disaggregating proteins, also in an autonomous, DnaK-independent fashion. Unfolded proteins bind initially to DnaJ; upon interaction with the DnaJ-bound protein, DnaK hydrolyzes its bound ATP, resulting in the formation of a stable complex. GrpE releases ADP from DnaK; ATP binding to DnaK triggers the release of the substrate protein, thus completing the reaction cycle. Several rounds of ATP-dependent interactions between DnaJ, DnaK and GrpE are required for fully efficient folding. Also involved, together with DnaK and GrpE, in the DNA replication of plasmids through activation of initiation proteins. In Aquifex aeolicus (strain VF5), this protein is Chaperone protein DnaJ 1.